Consider the following 82-residue polypeptide: Small ribosomal subunit protein bS18 (82 aa).

Residues 1 to 10 (MTDTNQNSSR) show a composition bias toward polar residues. Residues 1–21 (MTDTNQNSSRRPFHRRRKTCP) are disordered.

The protein belongs to the bacterial ribosomal protein bS18 family. Part of the 30S ribosomal subunit. Forms a tight heterodimer with protein bS6.

Functionally, binds as a heterodimer with protein bS6 to the central domain of the 16S rRNA, where it helps stabilize the platform of the 30S subunit. The protein is Small ribosomal subunit protein bS18 of Bartonella tribocorum (strain CIP 105476 / IBS 506).